The sequence spans 476 residues: Glycogen synthase (476 aa).

An ADP-alpha-D-glucose-binding site is contributed by lysine 15.

Belongs to the glycosyltransferase 1 family. Bacterial/plant glycogen synthase subfamily.

The catalysed reaction is [(1-&gt;4)-alpha-D-glucosyl](n) + ADP-alpha-D-glucose = [(1-&gt;4)-alpha-D-glucosyl](n+1) + ADP + H(+). It participates in glycan biosynthesis; glycogen biosynthesis. Synthesizes alpha-1,4-glucan chains using ADP-glucose. The protein is Glycogen synthase of Ligilactobacillus salivarius (strain UCC118) (Lactobacillus salivarius).